We begin with the raw amino-acid sequence, 131 residues long: D-ribose pyranase (131 aa).

Histidine 20 functions as the Proton donor in the catalytic mechanism. Substrate contacts are provided by residues aspartate 28, histidine 98, and 120-122; that span reads YSN.

The protein belongs to the RbsD / FucU family. RbsD subfamily. Homodecamer.

It localises to the cytoplasm. It carries out the reaction beta-D-ribopyranose = beta-D-ribofuranose. Its pathway is carbohydrate metabolism; D-ribose degradation; D-ribose 5-phosphate from beta-D-ribopyranose: step 1/2. Its function is as follows. Catalyzes the interconversion of beta-pyran and beta-furan forms of D-ribose. The polypeptide is D-ribose pyranase (Latilactobacillus sakei subsp. sakei (strain 23K) (Lactobacillus sakei subsp. sakei)).